A 126-amino-acid polypeptide reads, in one-letter code: MAILGLGTDIVEIDRIEAVISRSGDRLAKRVLSANEWAQYQAHQQPVRFLAKRFAVKEAAAKAFGTGIRNGLAFNQFEVFNDELGKPKLRLWDEAERLAARMGVTSVHVTLADERHYACATVIIES.

Mg(2+) is bound by residues aspartate 9 and glutamate 58.

It belongs to the P-Pant transferase superfamily. AcpS family. Mg(2+) is required as a cofactor.

The protein localises to the cytoplasm. It carries out the reaction apo-[ACP] + CoA = holo-[ACP] + adenosine 3',5'-bisphosphate + H(+). Functionally, transfers the 4'-phosphopantetheine moiety from coenzyme A to a Ser of acyl-carrier-protein. This Cronobacter sakazakii (strain ATCC BAA-894) (Enterobacter sakazakii) protein is Holo-[acyl-carrier-protein] synthase.